Reading from the N-terminus, the 78-residue chain is Small ribosomal subunit protein bS20 (78 aa).

This sequence belongs to the bacterial ribosomal protein bS20 family.

Functionally, binds directly to 16S ribosomal RNA. The protein is Small ribosomal subunit protein bS20 of Streptococcus pneumoniae serotype 4 (strain ATCC BAA-334 / TIGR4).